A 259-amino-acid chain; its full sequence is 14-3-3-like protein (259 aa).

The tract at residues 237 to 259 is disordered; sequence DTTDDAEDEIREGSKQESGDGQQ. Residues 247–259 show a composition bias toward basic and acidic residues; it reads REGSKQESGDGQQ.

The protein belongs to the 14-3-3 family. In terms of tissue distribution, leaves specific.

The protein is 14-3-3-like protein of Solanum tuberosum (Potato).